The chain runs to 953 residues: Isoleucine--tRNA ligase (953 aa).

Positions 61 to 71 match the 'HIGH' region motif; it reads PYANGALHIGH. Glu-564 lines the L-isoleucyl-5'-AMP pocket. The 'KMSKS' region signature appears at 605–609; it reads KMSKS. Lys-608 lines the ATP pocket. Cys-922, Cys-925, Cys-942, and Cys-945 together coordinate Zn(2+).

The protein belongs to the class-I aminoacyl-tRNA synthetase family. IleS type 1 subfamily. Monomer. It depends on Zn(2+) as a cofactor.

The protein resides in the cytoplasm. The catalysed reaction is tRNA(Ile) + L-isoleucine + ATP = L-isoleucyl-tRNA(Ile) + AMP + diphosphate. Its function is as follows. Catalyzes the attachment of isoleucine to tRNA(Ile). As IleRS can inadvertently accommodate and process structurally similar amino acids such as valine, to avoid such errors it has two additional distinct tRNA(Ile)-dependent editing activities. One activity is designated as 'pretransfer' editing and involves the hydrolysis of activated Val-AMP. The other activity is designated 'posttransfer' editing and involves deacylation of mischarged Val-tRNA(Ile). The sequence is that of Isoleucine--tRNA ligase from Thermosynechococcus vestitus (strain NIES-2133 / IAM M-273 / BP-1).